The sequence spans 314 residues: Methionyl-tRNA formyltransferase (314 aa).

Residue 110–113 participates in (6S)-5,6,7,8-tetrahydrofolate binding; that stretch reads SLLP.

This sequence belongs to the Fmt family.

It catalyses the reaction L-methionyl-tRNA(fMet) + (6R)-10-formyltetrahydrofolate = N-formyl-L-methionyl-tRNA(fMet) + (6S)-5,6,7,8-tetrahydrofolate + H(+). Attaches a formyl group to the free amino group of methionyl-tRNA(fMet). The formyl group appears to play a dual role in the initiator identity of N-formylmethionyl-tRNA by promoting its recognition by IF2 and preventing the misappropriation of this tRNA by the elongation apparatus. The protein is Methionyl-tRNA formyltransferase of Bacillus mycoides (strain KBAB4) (Bacillus weihenstephanensis).